The primary structure comprises 4760 residues: Nonribosomal peptide synthetase cm3A (4760 aa).

The span at 1–12 shows a compositional bias: polar residues; the sequence is MKHLASSENMPT. The interval 1–24 is disordered; sequence MKHLASSENMPTPAQDRAPSPSAM. A Carrier 1 domain is found at 19–95; it reads PSPSAMQQEI…ELSRSAECQL (77 aa). Ser-56 carries the O-(pantetheine 4'-phosphoryl)serine modification. Condensation stretches follow at residues 142–570 and 178–571; these read QDIF…EIEQ and PGLS…IEQL. The adenylation 1 stretch occupies residues 591 to 984; sequence DEQARLCPDA…GRRDTQVKLR (394 aa). In terms of domain architecture, Carrier 2 spans 1120–1197; it reads REATTLQLQI…KLTEKLGVPE (78 aa). Ser-1158 is subject to O-(pantetheine 4'-phosphoryl)serine. Condensation regions lie at residues 1210 to 1654 and 1689 to 2125; these read FPLS…KTPS and VEDM…NVTT. An adenylation 2 region spans residues 2171 to 2551; the sequence is DGDLTYFELD…DRKDWQIKIR (381 aa). Residues 2684–2762 enclose the Carrier 3 domain; sequence LPSSETEKTV…ELAHAIDQRS (79 aa). Ser-2721 carries the post-translational modification O-(pantetheine 4'-phosphoryl)serine. The segment at 2811 to 3203 is condensation 4; that stretch reads VEDIYPCTPL…RFKHIFGQLS (393 aa). The adenylation 3 stretch occupies residues 3255–3647; that stretch reads SATTPDRPAV…GRADQQLKIR (393 aa). Positions 3783–3857 constitute a Carrier 4 domain; sequence TRTEELMQSV…QLAQRATTDA (75 aa). Condensation stretches follow at residues 3869 to 4296 and 4340 to 4757; these read EFRL…TLLC and EDIY…EEMG.

It belongs to the nrps family.

It functions in the pathway secondary metabolite biosynthesis. Functionally, nonribosomal peptide synthetase; part of the gene cluster that mediates the biosynthesis of beauveriolides I and III, cyclodepsipeptides acting as inhibitors of the acyl-CoA:cholesterol acyltransferase. The HR-PKS cm3B initiates the biosynthesis of beauveriolides by iteratively catalyzing the formation of the linear polyketide chain. The ATP-dependent acetyl-CoA ligase cm3D converts the polyketide carboxylic acid to a CoA thioester which id shuttled to the first T domain in the NRPS cm3A by the acetyltransferase cm3C. Cm3A contains 13 domains and assembles the polyketide chain, L-phenylalanine, L-alanine, and D-leucine (or D-allo-isoleucine) to form beauveriolide I (or beauveriolide III). The production of both beauveriolides I and III suggests the substrate adaptability of cm3B, using different amino acids as substrates. In Cordyceps militaris (strain CM01) (Caterpillar fungus), this protein is Nonribosomal peptide synthetase cm3A.